A 201-amino-acid chain; its full sequence is Ribosome maturation factor RimM (201 aa).

In terms of domain architecture, PRC barrel spans 94–168 (EDEYYHADLI…RLVADPPLGL (75 aa)). Residues 164–201 (PPLGLLDDTRPPAGVEGEVEEDPGVGIDEDGDGKGGAS) are disordered. Residues 180–194 (GEVEEDPGVGIDEDG) are compositionally biased toward acidic residues.

This sequence belongs to the RimM family. Binds ribosomal protein uS19.

The protein resides in the cytoplasm. In terms of biological role, an accessory protein needed during the final step in the assembly of 30S ribosomal subunit, possibly for assembly of the head region. Essential for efficient processing of 16S rRNA. May be needed both before and after RbfA during the maturation of 16S rRNA. It has affinity for free ribosomal 30S subunits but not for 70S ribosomes. The polypeptide is Ribosome maturation factor RimM (Rhodospirillum rubrum (strain ATCC 11170 / ATH 1.1.1 / DSM 467 / LMG 4362 / NCIMB 8255 / S1)).